Consider the following 567-residue polypeptide: Oxygen-dependent choline dehydrogenase (567 aa).

4–33 (DYIIIGAGSAGNVLAARLTEDADVTVLLLE) provides a ligand contact to FAD. The Proton acceptor role is filled by His-473.

Belongs to the GMC oxidoreductase family. Requires FAD as cofactor.

It carries out the reaction choline + A = betaine aldehyde + AH2. It catalyses the reaction betaine aldehyde + NAD(+) + H2O = glycine betaine + NADH + 2 H(+). The protein operates within amine and polyamine biosynthesis; betaine biosynthesis via choline pathway; betaine aldehyde from choline (cytochrome c reductase route): step 1/1. Its function is as follows. Involved in the biosynthesis of the osmoprotectant glycine betaine. Catalyzes the oxidation of choline to betaine aldehyde and betaine aldehyde to glycine betaine at the same rate. The protein is Oxygen-dependent choline dehydrogenase of Yersinia pseudotuberculosis serotype O:1b (strain IP 31758).